Here is a 472-residue protein sequence, read N- to C-terminus: 3-isopropylmalate dehydratase large subunit (472 aa).

3 residues coordinate [4Fe-4S] cluster: Cys353, Cys414, and Cys417.

The protein belongs to the aconitase/IPM isomerase family. LeuC type 1 subfamily. As to quaternary structure, heterodimer of LeuC and LeuD. [4Fe-4S] cluster is required as a cofactor.

It carries out the reaction (2R,3S)-3-isopropylmalate = (2S)-2-isopropylmalate. The protein operates within amino-acid biosynthesis; L-leucine biosynthesis; L-leucine from 3-methyl-2-oxobutanoate: step 2/4. Catalyzes the isomerization between 2-isopropylmalate and 3-isopropylmalate, via the formation of 2-isopropylmaleate. In Psychrobacter arcticus (strain DSM 17307 / VKM B-2377 / 273-4), this protein is 3-isopropylmalate dehydratase large subunit.